Consider the following 201-residue polypeptide: 3-isopropylmalate dehydratase small subunit (201 aa).

It belongs to the LeuD family. LeuD type 1 subfamily. Heterodimer of LeuC and LeuD.

The catalysed reaction is (2R,3S)-3-isopropylmalate = (2S)-2-isopropylmalate. Its pathway is amino-acid biosynthesis; L-leucine biosynthesis; L-leucine from 3-methyl-2-oxobutanoate: step 2/4. Catalyzes the isomerization between 2-isopropylmalate and 3-isopropylmalate, via the formation of 2-isopropylmaleate. This chain is 3-isopropylmalate dehydratase small subunit, found in Methylorubrum extorquens (strain CM4 / NCIMB 13688) (Methylobacterium extorquens).